Here is a 399-residue protein sequence, read N- to C-terminus: S-adenosylmethionine synthase (399 aa).

Residue histidine 15 coordinates ATP. Residue aspartate 17 coordinates Mg(2+). Glutamate 43 contacts K(+). 2 residues coordinate L-methionine: glutamate 56 and glutamine 99. The segment at 99–109 (QSPDIAGGVDH) is flexible loop. Residues 175–177 (DAK), 242–243 (RF), aspartate 251, 257–258 (RK), alanine 274, and lysine 278 contribute to the ATP site. Aspartate 251 lines the L-methionine pocket. L-methionine is bound at residue lysine 282.

It belongs to the AdoMet synthase family. As to quaternary structure, homotetramer; dimer of dimers. The cofactor is Mg(2+). Requires K(+) as cofactor.

It localises to the cytoplasm. The enzyme catalyses L-methionine + ATP + H2O = S-adenosyl-L-methionine + phosphate + diphosphate. It participates in amino-acid biosynthesis; S-adenosyl-L-methionine biosynthesis; S-adenosyl-L-methionine from L-methionine: step 1/1. Its function is as follows. Catalyzes the formation of S-adenosylmethionine (AdoMet) from methionine and ATP. The overall synthetic reaction is composed of two sequential steps, AdoMet formation and the subsequent tripolyphosphate hydrolysis which occurs prior to release of AdoMet from the enzyme. This is S-adenosylmethionine synthase from Lactobacillus helveticus (strain DPC 4571).